Here is a 356-residue protein sequence, read N- to C-terminus: Putative [LysW]-L-2-aminoadipate/[LysW]-L-glutamate phosphate reductase (356 aa).

11 to 14 (SGYT) is a binding site for NADP(+). Cys-157 is a catalytic residue. Asn-323 contacts NADP(+).

It belongs to the NAGSA dehydrogenase family. Type 1 subfamily. LysY sub-subfamily.

The protein localises to the cytoplasm. It carries out the reaction [amino-group carrier protein]-C-terminal-N-(1-carboxy-5-oxopentan-1-yl)-L-glutamine + phosphate + NADP(+) = [amino-group carrier protein]-C-terminal-N-(1-carboxy-5-phosphooxy-5-oxopentan-1-yl)-L-glutamine + NADPH + H(+). The enzyme catalyses [amino-group carrier protein]-C-terminal-gamma-(L-glutamyl-5-semialdehyde)-L-glutamate + phosphate + NADP(+) = [amino-group carrier protein]-C-terminal-gamma-(5-phospho-L-glutamyl)-L-glutamate + NADPH + H(+). The protein operates within amino-acid biosynthesis; L-lysine biosynthesis via AAA pathway; L-lysine from L-alpha-aminoadipate (Thermus route): step 3/5. It functions in the pathway amino-acid biosynthesis; L-arginine biosynthesis. Functionally, involved in both the arginine and lysine biosynthetic pathways. The chain is Putative [LysW]-L-2-aminoadipate/[LysW]-L-glutamate phosphate reductase from Ignicoccus hospitalis (strain KIN4/I / DSM 18386 / JCM 14125).